Reading from the N-terminus, the 161-residue chain is 2-C-methyl-D-erythritol 2,4-cyclodiphosphate synthase (161 aa).

A divalent metal cation-binding residues include Asp-8 and His-10. Residues 8–10 (DLH) and 34–35 (HS) each bind 4-CDP-2-C-methyl-D-erythritol 2-phosphate. Residue His-42 coordinates a divalent metal cation. 4-CDP-2-C-methyl-D-erythritol 2-phosphate contacts are provided by residues 56-58 (DIG) and Arg-142.

Belongs to the IspF family. Homotrimer. A divalent metal cation is required as a cofactor.

It catalyses the reaction 4-CDP-2-C-methyl-D-erythritol 2-phosphate = 2-C-methyl-D-erythritol 2,4-cyclic diphosphate + CMP. It participates in isoprenoid biosynthesis; isopentenyl diphosphate biosynthesis via DXP pathway; isopentenyl diphosphate from 1-deoxy-D-xylulose 5-phosphate: step 4/6. Functionally, involved in the biosynthesis of isopentenyl diphosphate (IPP) and dimethylallyl diphosphate (DMAPP), two major building blocks of isoprenoid compounds. Catalyzes the conversion of 4-diphosphocytidyl-2-C-methyl-D-erythritol 2-phosphate (CDP-ME2P) to 2-C-methyl-D-erythritol 2,4-cyclodiphosphate (ME-CPP) with a corresponding release of cytidine 5-monophosphate (CMP). In Treponema denticola (strain ATCC 35405 / DSM 14222 / CIP 103919 / JCM 8153 / KCTC 15104), this protein is 2-C-methyl-D-erythritol 2,4-cyclodiphosphate synthase.